A 157-amino-acid chain; its full sequence is Ribosomal RNA large subunit methyltransferase H (157 aa).

Residues L73, G104, and L121–L126 contribute to the S-adenosyl-L-methionine site.

This sequence belongs to the RNA methyltransferase RlmH family. In terms of assembly, homodimer.

It is found in the cytoplasm. It carries out the reaction pseudouridine(1915) in 23S rRNA + S-adenosyl-L-methionine = N(3)-methylpseudouridine(1915) in 23S rRNA + S-adenosyl-L-homocysteine + H(+). In terms of biological role, specifically methylates the pseudouridine at position 1915 (m3Psi1915) in 23S rRNA. This Acidithiobacillus ferrooxidans (strain ATCC 23270 / DSM 14882 / CIP 104768 / NCIMB 8455) (Ferrobacillus ferrooxidans (strain ATCC 23270)) protein is Ribosomal RNA large subunit methyltransferase H.